A 418-amino-acid polypeptide reads, in one-letter code: D-inositol 3-phosphate glycosyltransferase (418 aa).

A 1D-myo-inositol 3-phosphate-binding site is contributed by His-9. UDP-N-acetyl-alpha-D-glucosamine is bound by residues 15-16 and Gly-23; that span reads QP. 1D-myo-inositol 3-phosphate is bound by residues 20–25, Lys-78, Tyr-110, Thr-134, and Arg-154; that span reads DSGGMN. UDP-N-acetyl-alpha-D-glucosamine-binding residues include Arg-231, Lys-236, and Arg-294. The Mg(2+) site is built by Tyr-303, Arg-304, and Ala-306. Glu-316 and Glu-324 together coordinate UDP-N-acetyl-alpha-D-glucosamine. Thr-330 contacts Mg(2+).

Belongs to the glycosyltransferase group 1 family. MshA subfamily. As to quaternary structure, homodimer.

The catalysed reaction is 1D-myo-inositol 3-phosphate + UDP-N-acetyl-alpha-D-glucosamine = 1D-myo-inositol 2-acetamido-2-deoxy-alpha-D-glucopyranoside 3-phosphate + UDP + H(+). Functionally, catalyzes the transfer of a N-acetyl-glucosamine moiety to 1D-myo-inositol 3-phosphate to produce 1D-myo-inositol 2-acetamido-2-deoxy-glucopyranoside 3-phosphate in the mycothiol biosynthesis pathway. The sequence is that of D-inositol 3-phosphate glycosyltransferase from Corynebacterium glutamicum (strain R).